The following is a 502-amino-acid chain: Hexokinase-9 (502 aa).

The chain crosses the membrane as a helical span at residues 5-24 (AALASAAMAAAAVAVVSTVL). The Hexokinase domain maps to 37 to 488 (RAEAVLLRDL…SGVGAALLAA (452 aa)). The hexokinase small subdomain stretch occupies residues 92 to 230 (SGGEKGMFYA…GLDMKVTALV (139 aa)). ADP-binding residues include Gly106, Thr107, and Asn108. 4 residues coordinate D-glucose: Thr196, Lys197, Asn231, and Asp232. The segment at 231–477 (NDTVGTLAAG…PSVMIKHVND (247 aa)) is hexokinase large subdomain. Residue Thr255 coordinates ADP. D-glucose contacts are provided by Asn258, Glu286, and Glu317. Gly442 serves as a coordination point for ADP.

This sequence belongs to the hexokinase family. Expressed in roots, leaves, flowers, immature seeds, endosperm and seed coat.

It is found in the plastid. The protein resides in the chloroplast outer membrane. It carries out the reaction a D-hexose + ATP = a D-hexose 6-phosphate + ADP + H(+). It catalyses the reaction D-fructose + ATP = D-fructose 6-phosphate + ADP + H(+). The catalysed reaction is D-glucose + ATP = D-glucose 6-phosphate + ADP + H(+). It functions in the pathway carbohydrate metabolism; hexose metabolism. It participates in carbohydrate degradation; glycolysis; D-glyceraldehyde 3-phosphate and glycerone phosphate from D-glucose: step 1/4. Fructose and glucose phosphorylating enzyme. The chain is Hexokinase-9 (HXK9) from Oryza sativa subsp. japonica (Rice).